The primary structure comprises 401 residues: 8-amino-7-oxononanoate synthase (401 aa).

Arg-24 lines the substrate pocket. 111 to 112 provides a ligand contact to pyridoxal 5'-phosphate; that stretch reads GF. His-137 is a substrate binding site. The pyridoxal 5'-phosphate site is built by Ser-183, His-211, and Thr-240. Lys-243 is subject to N6-(pyridoxal phosphate)lysine. Substrate is bound at residue Thr-357.

The protein belongs to the class-II pyridoxal-phosphate-dependent aminotransferase family. BioF subfamily. In terms of assembly, homodimer. Pyridoxal 5'-phosphate is required as a cofactor.

It catalyses the reaction 6-carboxyhexanoyl-[ACP] + L-alanine + H(+) = (8S)-8-amino-7-oxononanoate + holo-[ACP] + CO2. Its pathway is cofactor biosynthesis; biotin biosynthesis. Its function is as follows. Catalyzes the decarboxylative condensation of pimeloyl-[acyl-carrier protein] and L-alanine to produce 8-amino-7-oxononanoate (AON), [acyl-carrier protein], and carbon dioxide. This is 8-amino-7-oxononanoate synthase from Xanthomonas euvesicatoria pv. vesicatoria (strain 85-10) (Xanthomonas campestris pv. vesicatoria).